The following is a 474-amino-acid chain: Adenosylhomocysteinase (474 aa).

Residues threonine 53, aspartate 135, and glutamate 197 each coordinate substrate. Residue 198–200 (TTT) participates in NAD(+) binding. 2 residues coordinate substrate: lysine 227 and aspartate 231. NAD(+) is bound by residues asparagine 232, 261–266 (GYGDVG), glutamate 284, asparagine 319, 340–342 (IGH), and asparagine 388.

The protein belongs to the adenosylhomocysteinase family. NAD(+) is required as a cofactor.

The protein resides in the cytoplasm. It carries out the reaction S-adenosyl-L-homocysteine + H2O = L-homocysteine + adenosine. The protein operates within amino-acid biosynthesis; L-homocysteine biosynthesis; L-homocysteine from S-adenosyl-L-homocysteine: step 1/1. May play a key role in the regulation of the intracellular concentration of adenosylhomocysteine. In Corynebacterium glutamicum (strain ATCC 13032 / DSM 20300 / JCM 1318 / BCRC 11384 / CCUG 27702 / LMG 3730 / NBRC 12168 / NCIMB 10025 / NRRL B-2784 / 534), this protein is Adenosylhomocysteinase.